Reading from the N-terminus, the 416-residue chain is MAHSPVAVQVPGMQNNIADPEELFTKLERIGKGSFGEVFKGIDNRTQQVVAIKIIDLEEAEDEIEDIQQEITVLSQCDSSYVTKYYGSYLKGSKLWIIMEYLGGGSALDLLRAGPFDEFQIATMLKEILKGLDYLHSEKKIHRDIKAANVLLSEQGDVKLADFGVAGQLTDTQIKRNTFVGTPFWMAPEVIQQSAYDSKADIWSLGITAIELAKGEPPNSDMHPMRVLFLIPKNNPPTLIGDFTKSFKEFIDACLNKDPSFRPTAKELLKHKFIVKNSKKTSYLTELIDRFKRWKAEGHSDEESDSEGSDSESSSRESNPHPEWSFTTVRKKPDPKKLQNGEEQDLVQTLSCLSMIITPAFAELKQQDENNASRNQAIEELEKSIAVAETACPGITDKMVKKLIEKFQKCSADESP.

Ala2 is modified (N-acetylalanine). Position 4 is a phosphoserine (Ser4). A Protein kinase domain is found at 24 to 274; it reads FTKLERIGKG…AKELLKHKFI (251 aa). ATP contacts are provided by residues 30–38 and Lys53; that span reads IGKGSFGEV. Asp144 (proton acceptor) is an active-site residue. The residue at position 178 (Thr178) is a Phosphothreonine; by autocatalysis. A disordered region spans residues 296–343; it reads AEGHSDEESDSEGSDSESSSRESNPHPEWSFTTVRKKPDPKKLQNGEE. Phosphoserine is present on residues Ser300, Ser304, Ser306, Ser309, and Ser325. Phosphothreonine occurs at positions 327 and 328. Basic and acidic residues predominate over residues 331-340; the sequence is KKPDPKKLQN.

It belongs to the protein kinase superfamily. STE Ser/Thr protein kinase family. STE20 subfamily. In terms of assembly, homodimer. Interacts with PDCD10. Interacts with GOLGA2. Interacts with CTTNBP2NL. Interacts with RIPOR1 (via C-terminus); this interaction occurs in a PDCD10-dependent and Rho-independent manner. Interacts with PDCD10; this interaction is required for the association of STK26 with RIPOR1. Part of the core of STRIPAK complexes composed of PP2A catalytic and scaffolding subunits, the striatins (PP2A regulatory subunits), the striatin-associated proteins MOB4, STRIP1 and STRIP2, PDCD10 and members of the STE20 kinases, such as STK24 and STK26. Mg(2+) is required as a cofactor.

The protein localises to the cytoplasm. The protein resides in the golgi apparatus. The catalysed reaction is L-seryl-[protein] + ATP = O-phospho-L-seryl-[protein] + ADP + H(+). The enzyme catalyses L-threonyl-[protein] + ATP = O-phospho-L-threonyl-[protein] + ADP + H(+). With respect to regulation, interaction with Golgi matrix protein GOLGA2 leads to autophosphorylation on Thr-178, possibly as a consequence of stabilization of dimer formation. May also be activated by C-terminal cleavage. Its function is as follows. Serine/threonine-protein kinase that acts as a mediator of cell growth. Modulates apoptosis. In association with STK24 negatively regulates Golgi reorientation in polarized cell migration upon RHO activation. Phosphorylates ATG4B at 'Ser-383', thereby increasing autophagic flux. Part of the striatin-interacting phosphatase and kinase (STRIPAK) complexes. STRIPAK complexes have critical roles in protein (de)phosphorylation and are regulators of multiple signaling pathways including Hippo, MAPK, nuclear receptor and cytoskeleton remodeling. Different types of STRIPAK complexes are involved in a variety of biological processes such as cell growth, differentiation, apoptosis, metabolism and immune regulation. The polypeptide is Serine/threonine-protein kinase 26 (Mus musculus (Mouse)).